Consider the following 1935-residue polypeptide: Autophagy-related protein 2 (1935 aa).

The Chorein N-terminal domain maps to 30-121; sequence RFLSYVLKRT…SLDTLTLDFT (92 aa). Disordered stretches follow at residues 286-319 and 360-412; these read QRKPPSLVIPQRQSLEPSVSSSTSTASTSSGNDY and LSQP…GIPV. Residues 303–315 show a composition bias toward low complexity; that stretch reads SVSSSTSTASTSS. A compositionally biased stretch (polar residues) spans 397-406; it reads ETPTPETKPQ.

It belongs to the ATG2 family.

It is found in the preautophagosomal structure membrane. The protein localises to the endoplasmic reticulum membrane. It catalyses the reaction a 1,2-diacyl-sn-glycero-3-phosphocholine(in) = a 1,2-diacyl-sn-glycero-3-phosphocholine(out). The catalysed reaction is a 1,2-diacyl-sn-glycero-3-phospho-L-serine(in) = a 1,2-diacyl-sn-glycero-3-phospho-L-serine(out). It carries out the reaction a 1,2-diacyl-sn-glycero-3-phosphoethanolamine(in) = a 1,2-diacyl-sn-glycero-3-phosphoethanolamine(out). Its function is as follows. Lipid transfer protein required for autophagosome completion and peroxisome degradation. Tethers the edge of the isolation membrane (IM) to the endoplasmic reticulum (ER) and mediates direct lipid transfer from ER to IM for IM expansion. ATG2 binds to the ER exit site (ERES), which is the membrane source for autophagosome formation, using basic residues in its N-terminal region (NR) and to the expanding edge of the IM through its C-terminal region. The latter binding is assisted by an ATG18-PtdIns3P interaction. ATG2 then extracts phospholipids from the membrane source using its NR and transfers them to ATG9 to the IM through its predicted beta-sheet-rich structure for membrane expansion. The sequence is that of Autophagy-related protein 2 (ATG2) from Cryptococcus neoformans var. neoformans serotype D (strain B-3501A) (Filobasidiella neoformans).